Here is a 341-residue protein sequence, read N- to C-terminus: Probable 2' cyclic ADP-D-ribose synthase TcpO (341 aa).

A TIR domain is found at 204-336; it reads KEYDIFVSHS…EIIHEILERI (133 aa). Residues 213–214 and K243 each bind NAD(+); that span reads SS. The active site involves E279.

The enzyme catalyses NAD(+) + H2O = ADP-D-ribose + nicotinamide + H(+). It carries out the reaction NAD(+) = 2'cADPR + nicotinamide + H(+). Functionally, NAD(+) hydrolase (NADase) that catalyzes cleavage of NAD(+) into ADP-D-ribose (ADPR) and nicotinamide. In addition to ADPR, also generates a cyclization variant of cyclic ADPR (cADPR), termed v-cADPR (probably 2'cADPR). In Methanobrevibacter olleyae, this protein is Probable 2' cyclic ADP-D-ribose synthase TcpO.